A 165-amino-acid chain; its full sequence is Sporulation thiol-disulfide oxidoreductase A (165 aa).

Residues 1-26 (MLTKRLLTIYIMLLGLIAWFPGAAQA) form the signal peptide. The Thioredoxin domain occupies 27–165 (EEKQPAVPAV…AEQLKEWTEE (139 aa)). A disulfide bridge links C65 with C68.

Belongs to the thioredoxin family.

It localises to the spore outer membrane. Its function is as follows. Thiol-disulfide oxidoreductase with a reductive function, involved in spore cortex synthesis. It could be involved either in breaking disulfide bonds in cortex components or in proteins that are important for cortex synthesis, or in thiol/disulfide bond interchange. The polypeptide is Sporulation thiol-disulfide oxidoreductase A (stoA) (Bacillus subtilis (strain 168)).